The following is a 331-amino-acid chain: MNSAPKLNTFQHLIGEHQTFLEAKRIAKQFSLSELPVLITGKIGTGKNHFAHAIHLESSRSNEPFISVNCSTHSEETLIHELFGPNGNTGVFQKAVRGTLFLDDVWRMPASVQAQLLKALDSDTEKPRMICASADRSVEHTFRQDLFYRLNILTLTLPELSERKSDIPLLTQHFLSNSGQQLLIDPSVFPVLEKHAFEGNVRELKNAADYMAAVSSGGTIQPYDLPPYIRGTIDGKTSKKKAKLLTLMEKAEFLFILETIKVLNEKGEPASRRIISEHSKNTQTSLTPQQVRSRLDYLEKKDYVTKSRGRAGTKITFEGLSFIETLKNQMI.

A Sigma-54 factor interaction domain is found at 12 to 213 (HLIGEHQTFL…LKNAADYMAA (202 aa)). 95 to 104 (AVRGTLFLDD) serves as a coordination point for ATP.

Functionally, may play a role in cold adaptation. The polypeptide is Putative sigma L-dependent transcriptional regulator YplP (yplP) (Bacillus subtilis (strain 168)).